A 339-amino-acid polypeptide reads, in one-letter code: Methionine import ATP-binding protein MetN 1 (339 aa).

Residues isoleucine 2–valine 241 enclose the ABC transporter domain. Glycine 38–serine 45 serves as a coordination point for ATP.

This sequence belongs to the ABC transporter superfamily. Methionine importer (TC 3.A.1.24) family. In terms of assembly, the complex is composed of two ATP-binding proteins (MetN), two transmembrane proteins (MetI) and a solute-binding protein (MetQ).

The protein resides in the cell membrane. It catalyses the reaction L-methionine(out) + ATP + H2O = L-methionine(in) + ADP + phosphate + H(+). It carries out the reaction D-methionine(out) + ATP + H2O = D-methionine(in) + ADP + phosphate + H(+). Functionally, part of the ABC transporter complex MetNIQ involved in methionine import. Responsible for energy coupling to the transport system. The chain is Methionine import ATP-binding protein MetN 1 from Bacillus thuringiensis subsp. konkukian (strain 97-27).